Here is a 602-residue protein sequence, read N- to C-terminus: Arginine--tRNA ligase (602 aa).

Residues 124–134 carry the 'HIGH' region motif; it reads ANPTGPVHVGR.

Belongs to the class-I aminoacyl-tRNA synthetase family.

It localises to the cytoplasm. It carries out the reaction tRNA(Arg) + L-arginine + ATP = L-arginyl-tRNA(Arg) + AMP + diphosphate. In Halorubrum lacusprofundi (strain ATCC 49239 / DSM 5036 / JCM 8891 / ACAM 34), this protein is Arginine--tRNA ligase.